An 825-amino-acid chain; its full sequence is NT-3 growth factor receptor (825 aa).

The first 31 residues, 1 to 31 (MDVSLCPAKCSFWRIFLLGSVWLDYVGSVLA), serve as a signal peptide directing secretion. Disulfide bonds link C32–C38 and C36–C45. Over 32–429 (CPANCVCSKT…TVTHKPEEDT (398 aa)) the chain is Extracellular. Residues N68, N72, and N79 are each glycosylated (N-linked (GlcNAc...) asparagine). 2 LRR repeats span residues 104–125 (GLQK…AFAK) and 128–149 (HLRY…LFQT). N-linked (GlcNAc...) asparagine glycosylation is found at N133 and N163. Residues 160-209 (NFFNCSCDIRWMQLWQEQGEAKLNSQSLYCISADGSQLPLFRMNISQCDL) enclose the LRRCT domain. 2 disulfides stabilise this stretch: C164/C189 and C166/C207. 7 N-linked (GlcNAc...) asparagine glycosylation sites follow: N203, N218, N232, N259, N267, N272, and N294. 2 Ig-like C2-type domains span residues 210-300 (PEIS…VALT) and 309-382 (SLEE…NRQE). The cysteines at positions 231 and 284 are disulfide-linked. An intrachain disulfide couples C320 to C362. Residues N375 and N388 are each glycosylated (N-linked (GlcNAc...) asparagine). Residues 430-453 (FGVSIAVGLAAFACVLLVVLFIMI) traverse the membrane as a helical segment. The Cytoplasmic segment spans residues 454-825 (NKYGRRSKFG…ATPIYLDILG (372 aa)). Y516 carries the post-translational modification Phosphotyrosine; by autocatalysis. The Protein kinase domain occupies 538-814 (IVLKRELGEG…EIYKILHALG (277 aa)). ATP contacts are provided by residues 544 to 552 (LGEGAFGKV) and K572. Catalysis depends on D679, which acts as the Proton acceptor. Phosphotyrosine; by autocatalysis occurs at positions 705, 709, 710, and 820.

This sequence belongs to the protein kinase superfamily. Tyr protein kinase family. Insulin receptor subfamily. As to quaternary structure, exists in a dynamic equilibrium between monomeric (low affinity) and dimeric (high affinity) structures. Binds SH2B2. Interacts with SQSTM1 and KIDINS220. Interacts with PTPRS. Interacts with MAPK8IP3/JIP3. In terms of processing, ligand-mediated auto-phosphorylation. Preferentially in the brain, low levels in the ovaries.

The protein localises to the membrane. It carries out the reaction L-tyrosyl-[protein] + ATP = O-phospho-L-tyrosyl-[protein] + ADP + H(+). Functionally, receptor tyrosine kinase involved in nervous system and probably heart development. Upon binding of its ligand NTF3/neurotrophin-3, NTRK3 autophosphorylates and activates different signaling pathways, including the phosphatidylinositol 3-kinase/AKT and the MAPK pathways, that control cell survival and differentiation. This Sus scrofa (Pig) protein is NT-3 growth factor receptor (NTRK3).